The following is an 842-amino-acid chain: Protein P (842 aa).

A terminal protein domain (TP) region spans residues 1-177 (MPLSYQHFRR…FCGSPYTWEQ (177 aa)). The spacer stretch occupies residues 178–345 (DLQHGAFLDG…YCLSHLVNLL (168 aa)). Residues 184-238 (FLDGPSRVGKEPFHQQSSRIPSRSPVGPSIQSKYQQSRLGLQSQKGPLARGQQGR) are disordered. Residues 212–228 (SIQSKYQQSRLGLQSQK) show a composition bias toward polar residues. The interval 346–689 (QDWGPCTEHG…YMNLYPVARQ (344 aa)) is polymerase/reverse transcriptase domain (RT). Residues 356-599 (EYHIRIPRTP…YSLNFMGYVI (244 aa)) enclose the Reverse transcriptase domain. 3 residues coordinate Mg(2+): D428, D550, and D551.

Belongs to the hepadnaviridae P protein family.

The catalysed reaction is DNA(n) + a 2'-deoxyribonucleoside 5'-triphosphate = DNA(n+1) + diphosphate. The enzyme catalyses Endonucleolytic cleavage to 5'-phosphomonoester.. Activated by host HSP70 and HSP40 in vitro to be able to bind the epsilon loop of the pgRNA. Because deletion of the RNase H region renders the protein partly chaperone-independent, the chaperones may be needed indirectly to relieve occlusion of the RNA-binding site by this domain. Inhibited by several reverse-transcriptase inhibitors: Lamivudine, Adefovir and Entecavir. Functionally, multifunctional enzyme that converts the viral RNA genome into dsDNA in viral cytoplasmic capsids. This enzyme displays a DNA polymerase activity that can copy either DNA or RNA templates, and a ribonuclease H (RNase H) activity that cleaves the RNA strand of RNA-DNA heteroduplexes in a partially processive 3'- to 5'-endonucleasic mode. Neo-synthesized pregenomic RNA (pgRNA) are encapsidated together with the P protein, and reverse-transcribed inside the nucleocapsid. Initiation of reverse-transcription occurs first by binding the epsilon loop on the pgRNA genome, and is initiated by protein priming, thereby the 5'-end of (-)DNA is covalently linked to P protein. Partial (+)DNA is synthesized from the (-)DNA template and generates the relaxed circular DNA (RC-DNA) genome. After budding and infection, the RC-DNA migrates in the nucleus, and is converted into a plasmid-like covalently closed circular DNA (cccDNA). The activity of P protein does not seem to be necessary for cccDNA generation, and is presumably released from (+)DNA by host nuclear DNA repair machinery. This Hepatitis B virus genotype G (isolate United States/USG17/2002) (HBV-G) protein is Protein P.